A 279-amino-acid chain; its full sequence is Tryptophan synthase alpha chain (279 aa).

Active-site proton acceptor residues include glutamate 50 and aspartate 61.

Belongs to the TrpA family. Tetramer of two alpha and two beta chains.

It carries out the reaction (1S,2R)-1-C-(indol-3-yl)glycerol 3-phosphate + L-serine = D-glyceraldehyde 3-phosphate + L-tryptophan + H2O. It participates in amino-acid biosynthesis; L-tryptophan biosynthesis; L-tryptophan from chorismate: step 5/5. In terms of biological role, the alpha subunit is responsible for the aldol cleavage of indoleglycerol phosphate to indole and glyceraldehyde 3-phosphate. This Rhizobium johnstonii (strain DSM 114642 / LMG 32736 / 3841) (Rhizobium leguminosarum bv. viciae) protein is Tryptophan synthase alpha chain.